The chain runs to 129 residues: Lysozyme C (129 aa).

Positions 1-129 (KIYTRCELAA…VSKWIKDCKL (129 aa)) constitute a C-type lysozyme domain. 4 disulfide bridges follow: C6–C127, C30–C115, C64–C80, and C76–C94. Active-site residues include E35 and D52.

It belongs to the glycosyl hydrolase 22 family. In terms of assembly, monomer.

Its subcellular location is the secreted. It catalyses the reaction Hydrolysis of (1-&gt;4)-beta-linkages between N-acetylmuramic acid and N-acetyl-D-glucosamine residues in a peptidoglycan and between N-acetyl-D-glucosamine residues in chitodextrins.. Its function is as follows. Lysozymes have primarily a bacteriolytic function; those in tissues and body fluids are associated with the monocyte-macrophage system and enhance the activity of immunoagents. The protein is Lysozyme C (LYZ) of Crax fasciolata (Bare-faced curassow).